Reading from the N-terminus, the 431-residue chain is Glucose-1-phosphate adenylyltransferase (431 aa).

Position 39 (Lys39) interacts with beta-D-fructose 1,6-bisphosphate. AMP is bound by residues Arg40, His46, and Arg52. Alpha-D-glucose 1-phosphate is bound by residues Tyr114, Gly179, 194-195 (EK), and Ser212. Residues Glu370 and Arg386 each contribute to the AMP site. Beta-D-fructose 1,6-bisphosphate-binding positions include 419–423 (REMLR) and 429–431 (QER).

The protein belongs to the bacterial/plant glucose-1-phosphate adenylyltransferase family. Homotetramer.

The catalysed reaction is alpha-D-glucose 1-phosphate + ATP + H(+) = ADP-alpha-D-glucose + diphosphate. Its pathway is glycan biosynthesis; glycogen biosynthesis. With respect to regulation, allosterically activated by fructose-1,6-bisphosphate (F16BP) and inhibited by AMP. Involved in the biosynthesis of ADP-glucose, a building block required for the elongation reactions to produce glycogen. Catalyzes the reaction between ATP and alpha-D-glucose 1-phosphate (G1P) to produce pyrophosphate and ADP-Glc. This Salmonella typhi protein is Glucose-1-phosphate adenylyltransferase.